Here is a 204-residue protein sequence, read N- to C-terminus: Probable peptidyl-tRNA hydrolase (204 aa).

Catalysis depends on histidine 36, which acts as the Proton acceptor. Residues asparagine 86 and asparagine 132 each contribute to the tRNA site.

It belongs to the PTH family.

The catalysed reaction is an N-acyl-L-alpha-aminoacyl-tRNA + H2O = an N-acyl-L-amino acid + a tRNA + H(+). Functionally, peptidyl-tRNA hydrolase that cleaves nascent chains-tRNAs that are not stably fixed in the P-site of 60S ribosome-nascent chain complexes. Acts downstream of the ribosome-associated quality control (RQC) pathway to release non-ubiquitinated nascent chains from 60S and 80S ribosome-nascent chain complexes. Does not act on ubiquitinated nascent chains, which are cleaved by ANKZF1 for degradation. In Mus musculus (Mouse), this protein is Probable peptidyl-tRNA hydrolase.